Consider the following 862-residue polypeptide: MNNTTSDINDQRYEPREVEAYWQKEWANDDLYRTNTEVNKENTFYALSMFPYPSGSLHMGHVRNYVITDVLARYKRMKGLNVLHPMGWDSFGLPAENAAIERETSPSTWTDKNISQMKDQLDRLGLSIDWSKEVTTCKEDYYKWTQYIFNQLHKNNLAYQKKATVNWDPIDQTVLANEQVDAEGKSWRSGAKVEKKELNQWFLRITSFAEDLNKDLVTLNDWPDRVRVMQKNWIGKSIGAEITFDIKNSDQKITAFTTRIDTVYGVSYLVLASNHPLIDQLISSNDIDKLNDFRQTQEKLSDLERNSDTRQKLGMYLGVDAINPANNKEIPIWIGDYVIMEYGTGAVMGVPAHDSRDYQFAKSYDLPIQYVIKPNIGEDESYLNAEFVDKGVMINSDKFNGIESDIAKTKILEFGSNSNWAKPKITYKLRDWLISRQRYWGCPIPIINCKKCGQVRVPDDDLPVVLPIDIKLTGKGKSPLTTKTEWINTCCPKCGTDAKRETDTMDTFMCSSWYFLRYINPDNCEKPFLKSEIDKWLPVKQYVGGIEHAILHLLYSRFLTKALKRCGLINIDEPFKKLLTQGMVQAVTFKNPNTNKYFSKDQIKDIDNPKDPLTGENIEIIYEKMSKSKYNGVDPSVVIDKYGADTARMFILFKAPPEKDLEWDDSDVEGQYRFIQRLWKFVINTFKLTNNNSRSNIEKEKSKDEEALRLINIAIKEITDDLDNLQFNTAISELMKVVNGLSLIVNYCSNETLNKVISILVKITSPFSPHIAEELWKTIGNTQSIHLQSWPEFDAGAIEQDTFKLMIQINGKVRGSINASKNLSKENLEDLAIKTEAAIKWMDGKEPKRIIVVPNKLVNIVI.

A 'HIGH' region motif is present at residues 51 to 61 (PYPSGSLHMGH). A 'KMSKS' region motif is present at residues 624 to 628 (KMSKS). Residue Lys627 participates in ATP binding.

It belongs to the class-I aminoacyl-tRNA synthetase family.

The protein resides in the cytoplasm. It catalyses the reaction tRNA(Leu) + L-leucine + ATP = L-leucyl-tRNA(Leu) + AMP + diphosphate. This is Leucine--tRNA ligase from Prochlorococcus marinus (strain NATL1A).